The following is a 349-amino-acid chain: Selenide, water dikinase (349 aa).

Cysteine 17 is an active-site residue. ATP is bound by residues lysine 20 and 48 to 50 (MAD). Aspartate 51 is a binding site for Mg(2+). Residues aspartate 68, aspartate 91, and 139 to 141 (GHS) each bind ATP. Aspartate 91 serves as a coordination point for Mg(2+). Aspartate 227 lines the Mg(2+) pocket.

Belongs to the selenophosphate synthase 1 family. Class I subfamily. Homodimer. Requires Mg(2+) as cofactor.

It catalyses the reaction hydrogenselenide + ATP + H2O = selenophosphate + AMP + phosphate + 2 H(+). Synthesizes selenophosphate from selenide and ATP. This Rhizobium meliloti (strain 1021) (Ensifer meliloti) protein is Selenide, water dikinase.